Consider the following 335-residue polypeptide: Glyceraldehyde-3-phosphate dehydrogenase (335 aa).

NAD(+) contacts are provided by residues 11–12 and G110; that span reads TI. 139–141 serves as a coordination point for D-glyceraldehyde 3-phosphate; that stretch reads SCN. The active-site Nucleophile is C140. Residue R168 participates in NAD(+) binding. Residue 194 to 195 participates in D-glyceraldehyde 3-phosphate binding; that stretch reads HG. Q301 contributes to the NAD(+) binding site.

It belongs to the glyceraldehyde-3-phosphate dehydrogenase family. Homotetramer.

Its subcellular location is the cytoplasm. It catalyses the reaction D-glyceraldehyde 3-phosphate + phosphate + NADP(+) = (2R)-3-phospho-glyceroyl phosphate + NADPH + H(+). The enzyme catalyses D-glyceraldehyde 3-phosphate + phosphate + NAD(+) = (2R)-3-phospho-glyceroyl phosphate + NADH + H(+). It participates in carbohydrate degradation; glycolysis; pyruvate from D-glyceraldehyde 3-phosphate: step 1/5. This chain is Glyceraldehyde-3-phosphate dehydrogenase, found in Halobacterium salinarum (strain ATCC 29341 / DSM 671 / R1).